A 147-amino-acid chain; its full sequence is 3-dehydroquinate dehydratase (147 aa).

Tyrosine 23 acts as the Proton acceptor in catalysis. Asparagine 74, histidine 80, and aspartate 87 together coordinate substrate. Histidine 100 acts as the Proton donor in catalysis. Substrate contacts are provided by residues 101–102 and arginine 111; that span reads LS.

This sequence belongs to the type-II 3-dehydroquinase family. In terms of assembly, homododecamer.

The catalysed reaction is 3-dehydroquinate = 3-dehydroshikimate + H2O. The protein operates within metabolic intermediate biosynthesis; chorismate biosynthesis; chorismate from D-erythrose 4-phosphate and phosphoenolpyruvate: step 3/7. Its function is as follows. Catalyzes a trans-dehydration via an enolate intermediate. The chain is 3-dehydroquinate dehydratase from Glaesserella parasuis serovar 5 (strain SH0165) (Haemophilus parasuis).